The primary structure comprises 363 residues: 3-dehydroquinate synthase (363 aa).

NAD(+) contacts are provided by residues 75 to 80 (DAEEGK), 109 to 113 (GAVTD), 133 to 134 (TS), Lys146, Lys155, and 173 to 176 (TLST). Zn(2+) is bound by residues Glu188, His251, and His267.

Belongs to the sugar phosphate cyclases superfamily. Dehydroquinate synthase family. Requires Co(2+) as cofactor. Zn(2+) serves as cofactor. It depends on NAD(+) as a cofactor.

It localises to the cytoplasm. The enzyme catalyses 7-phospho-2-dehydro-3-deoxy-D-arabino-heptonate = 3-dehydroquinate + phosphate. It functions in the pathway metabolic intermediate biosynthesis; chorismate biosynthesis; chorismate from D-erythrose 4-phosphate and phosphoenolpyruvate: step 2/7. Its function is as follows. Catalyzes the conversion of 3-deoxy-D-arabino-heptulosonate 7-phosphate (DAHP) to dehydroquinate (DHQ). In Arthrobacter sp. (strain FB24), this protein is 3-dehydroquinate synthase.